A 163-amino-acid polypeptide reads, in one-letter code: Nucleotide-binding protein BA_1166 (163 aa).

The protein belongs to the YajQ family.

Nucleotide-binding protein. This Bacillus anthracis protein is Nucleotide-binding protein BA_1166.